The chain runs to 616 residues: Protein cereblon (616 aa).

Disordered stretches follow at residues Met-1 to Val-39, Phe-63 to Arg-137, and Ser-182 to Met-220. A compositionally biased stretch (low complexity) spans Ala-11–Val-32. The segment covering Ser-96 to Glu-107 has biased composition (acidic residues). Basic and acidic residues predominate over residues Gln-183–Asp-192. Acidic residues predominate over residues Val-194 to Leu-203. Residues His-206–Pro-215 are compositionally biased toward pro residues. Residues His-257–Thr-482 form the Lon N-terminal domain. Residues Glu-481–Lys-590 form the CULT domain. Positions 486, 489, 555, and 558 each coordinate Zn(2+).

Belongs to the CRBN family. As to quaternary structure, likely a component of a DCX (DDB1-CUL4-X-box) protein ligase complex. May interact with pic/DDB1. Ubiquitinated.

It is found in the nucleus. It participates in protein modification; protein ubiquitination. Substrate recognition component of a DCX (DDB1-CUL4-X-box) E3 protein ligase complex that mediates the ubiquitination and subsequent proteasomal degradation of target proteins. Has an essential role in mediating growth by negatively regulating insulin signaling. It also has a role in maintaining presynaptic function in the neuromuscular junction synapses of third-instar larvae. The chain is Protein cereblon from Drosophila pseudoobscura pseudoobscura (Fruit fly).